Here is a 1101-residue protein sequence, read N- to C-terminus: Rho GTPase-activating protein 30 (1101 aa).

One can recognise a Rho-GAP domain in the interval 20–215 (CDLQEHLQHS…FILTHVDQLF (196 aa)). Disordered stretches follow at residues 224–243 (EVES…SPED), 300–400 (HETK…RAGG), and 451–529 (ALQH…AEDG). The segment covering 308–318 (RGAEDREDKSN) has biased composition (basic and acidic residues). Residues 360–376 (LENDSIEAAEGEQEPEA) show a composition bias toward acidic residues. Pro residues predominate over residues 459–472 (ASGPGPGPGLGPGP). The span at 508 to 520 (DSFSFLEDSSSSE) shows a compositional bias: low complexity. A Phosphoserine modification is found at S576. 2 disordered regions span residues 621–906 (GPKP…QPSP) and 965–991 (CPRP…SWRN). Basic and acidic residues-rich tracts occupy residues 658 to 694 (GEDK…DRGE), 701 to 735 (TKVR…KGVE), 759 to 770 (EEAQVEAGRDLE), and 779 to 822 (AEEK…DSRS). The span at 976-991 (GERAWGSRASRSSWRN) shows a compositional bias: low complexity. At S996 the chain carries Phosphoserine. Residues 1050 to 1101 (LELPSEGAEGSGSRSRLSLPPREPQVPDPLLSSQRRSYAFETQANPGKGEGL) are disordered. The segment covering 1053-1069 (PSEGAEGSGSRSRLSLP) has biased composition (low complexity). Residues 1080-1094 (LSSQRRSYAFETQAN) are compositionally biased toward polar residues.

As to quaternary structure, interacts with RHOU in a GTP-independent manner.

The protein resides in the cytoplasmic vesicle. GTPase-activating protein (GAP) for RAC1 and RHOA, but not for CDC42. The sequence is that of Rho GTPase-activating protein 30 (ARHGAP30) from Homo sapiens (Human).